A 369-amino-acid chain; its full sequence is 3-dehydroquinate synthase (369 aa).

Residues 75–80 (DGEEHK), 109–113 (GVIGD), 133–134 (TT), Lys-146, Lys-155, and 173–176 (TLKT) each bind NAD(+). Zn(2+) contacts are provided by Glu-188, His-251, and His-268.

It belongs to the sugar phosphate cyclases superfamily. Dehydroquinate synthase family. Co(2+) serves as cofactor. Zn(2+) is required as a cofactor. The cofactor is NAD(+).

It localises to the cytoplasm. It catalyses the reaction 7-phospho-2-dehydro-3-deoxy-D-arabino-heptonate = 3-dehydroquinate + phosphate. Its pathway is metabolic intermediate biosynthesis; chorismate biosynthesis; chorismate from D-erythrose 4-phosphate and phosphoenolpyruvate: step 2/7. In terms of biological role, catalyzes the conversion of 3-deoxy-D-arabino-heptulosonate 7-phosphate (DAHP) to dehydroquinate (DHQ). This Legionella pneumophila (strain Paris) protein is 3-dehydroquinate synthase.